A 248-amino-acid chain; its full sequence is mRNA-decapping protein OPG122 (248 aa).

One can recognise a Nudix hydrolase domain in the interval 45–227; sequence HKRVSVSAIL…IAKYALDTAK (183 aa). A Nudix box motif is present at residues 126-147; sequence GIPKRGENVPECLSREIKEEVN. Residue E132 participates in Mg(2+) binding. Catalysis depends on E141, which acts as the Nucleophile. A Mn(2+)-binding site is contributed by E145. Position 167 (D167) interacts with Mg(2+).

Belongs to the Nudix hydrolase family. It depends on Mg(2+) as a cofactor. Mn(2+) serves as cofactor.

The protein resides in the host mitochondrion. Functionally, decapping enzyme that remove the protective 5'-cap from both host and viral mRNAs to commit transcripts for decay by the cellular exonuclease XRN1. Preferentially targets spliced mRNAs and since all viral genes are intronless, it preferentially targets host over viral transcripts. Acceleration of the turnover of cellular transcripts promotes the shutoff of host protein synthesis and therefore diminish the magnitude of antiviral response. The chain is mRNA-decapping protein OPG122 (OPG122) from Vaccinia virus (strain Copenhagen) (VACV).